A 545-amino-acid polypeptide reads, in one-letter code: Glucose-6-phosphate isomerase (545 aa).

The active-site Proton donor is the Glu351. Catalysis depends on residues His382 and Lys510.

The protein belongs to the GPI family.

It is found in the cytoplasm. It carries out the reaction alpha-D-glucose 6-phosphate = beta-D-fructose 6-phosphate. It functions in the pathway carbohydrate biosynthesis; gluconeogenesis. The protein operates within carbohydrate degradation; glycolysis; D-glyceraldehyde 3-phosphate and glycerone phosphate from D-glucose: step 2/4. Catalyzes the reversible isomerization of glucose-6-phosphate to fructose-6-phosphate. The polypeptide is Glucose-6-phosphate isomerase (Shewanella sp. (strain ANA-3)).